The sequence spans 274 residues: uncharacterized protein (274 aa).

A compositionally biased stretch (basic and acidic residues) spans 1 to 15 (MEESKTKRKEDRIDL). The disordered stretch occupies residues 1-40 (MEESKTKRKEDRIDLKNTPPQKKSKRDSTNDETARTSLRS). Positions 41–87 (IMPRGYKMMENMGYKEGETLGSNESALKEPIKVEINTKRRGIRAEKP) constitute a G-patch domain.

It is found in the cytoplasm. Its subcellular location is the nucleus. This is an uncharacterized protein from Saccharomyces cerevisiae (strain ATCC 204508 / S288c) (Baker's yeast).